The primary structure comprises 123 residues: KQFTKCQLSQVLKSMDGYKGVTLPEWICTIFHNSGYDTQTIVKNNGKTEYGLFEINNKMWCRDNQILPSRNICGISCNKFLDDDLTDDVMCAKKDLDSEGIDYWLAHKPLCSEKLEQWLCEEL.

The C-type lysozyme domain occupies K1 to L123. Cystine bridges form between C6–C120, C28–C111, C61–C77, and C73–C91. Ca(2+) is bound by residues K79, D82, D84, D87, and D88.

This sequence belongs to the glycosyl hydrolase 22 family. As to quaternary structure, lactose synthase (LS) is a heterodimer of a catalytic component, beta1,4-galactosyltransferase (beta4Gal-T1) and a regulatory component, alpha-lactalbumin (LA). In terms of tissue distribution, mammary gland specific. Secreted in milk.

It is found in the secreted. Its function is as follows. Regulatory subunit of lactose synthase, changes the substrate specificity of galactosyltransferase in the mammary gland making glucose a good acceptor substrate for this enzyme. This enables LS to synthesize lactose, the major carbohydrate component of milk. In other tissues, galactosyltransferase transfers galactose onto the N-acetylglucosamine of the oligosaccharide chains in glycoproteins. The protein is Alpha-lactalbumin B/C of Equus caballus (Horse).